The following is a 114-amino-acid chain: Nucleoid-associated protein SGR_3378 (114 aa).

It belongs to the YbaB/EbfC family. As to quaternary structure, homodimer.

Its subcellular location is the cytoplasm. It localises to the nucleoid. Its function is as follows. Binds to DNA and alters its conformation. May be involved in regulation of gene expression, nucleoid organization and DNA protection. The sequence is that of Nucleoid-associated protein SGR_3378 from Streptomyces griseus subsp. griseus (strain JCM 4626 / CBS 651.72 / NBRC 13350 / KCC S-0626 / ISP 5235).